The following is a 139-amino-acid chain: Holo-[acyl-carrier-protein] synthase (139 aa).

Residues Asp-8 and Glu-61 each contribute to the Mg(2+) site.

This sequence belongs to the P-Pant transferase superfamily. AcpS family. Mg(2+) is required as a cofactor.

It localises to the cytoplasm. It carries out the reaction apo-[ACP] + CoA = holo-[ACP] + adenosine 3',5'-bisphosphate + H(+). Its function is as follows. Transfers the 4'-phosphopantetheine moiety from coenzyme A to a Ser of acyl-carrier-protein. This Bradyrhizobium sp. (strain BTAi1 / ATCC BAA-1182) protein is Holo-[acyl-carrier-protein] synthase.